The following is a 422-amino-acid chain: L-2-hydroxyglutarate dehydrogenase (422 aa).

The protein belongs to the L2HGDH family. It depends on FAD as a cofactor.

The protein localises to the cell inner membrane. The catalysed reaction is (S)-2-hydroxyglutarate + a quinone = a quinol + 2-oxoglutarate. It functions in the pathway amino-acid degradation. Its function is as follows. Catalyzes the dehydrogenation of L-2-hydroxyglutarate (L2HG) to alpha-ketoglutarate and couples to the respiratory chain by feeding electrons from the reaction into the membrane quinone pool. Functions in a L-lysine degradation pathway that proceeds via cadaverine, glutarate and L-2-hydroxyglutarate. This Escherichia coli (strain K12) protein is L-2-hydroxyglutarate dehydrogenase.